The primary structure comprises 181 residues: Protein Syd (181 aa).

This sequence belongs to the Syd family.

The protein resides in the cell inner membrane. Functionally, interacts with the SecY protein in vivo. May bind preferentially to an uncomplexed state of SecY, thus functioning either as a chelating agent for excess SecY in the cell or as a regulatory factor that negatively controls the translocase function. The sequence is that of Protein Syd from Shigella flexneri.